The sequence spans 377 residues: Flap endonuclease 1 (377 aa).

Positions 1-105 are N-domain; that stretch reads MGIKGLSQVI…GELAKRASRQ (105 aa). Position 34 (Asp-34) interacts with Mg(2+). Positions 47 and 71 each coordinate DNA. Asp-87 serves as a coordination point for Mg(2+). The interval 96 to 115 is disordered; sequence GELAKRASRQQKAREEREEA. Residues 123–254 form an I-domain region; it reads MVDKFAKRTV…ARAVELIRQH (132 aa). Glu-159, Glu-161, Asp-180, and Asp-182 together coordinate Mg(2+). Position 159 (Glu-159) interacts with DNA. The DNA site is built by Gly-232 and Asp-234. Asp-234 is a binding site for Mg(2+). Residues 337-345 are interaction with PCNA; the sequence is PQGRLDSFF. The segment at 350–377 is disordered; it reads STKKEKEKPKAAAKRKRDTKSSAPKKKR. The segment covering 360–377 has biased composition (basic residues); the sequence is AAAKRKRDTKSSAPKKKR.

It belongs to the XPG/RAD2 endonuclease family. FEN1 subfamily. In terms of assembly, interacts with PCNA. Three molecules of rad2 bind to one PCNA trimer with each molecule binding to one PCNA monomer. PCNA stimulates the nuclease activity without altering cleavage specificity. Requires Mg(2+) as cofactor. Post-translationally, phosphorylated. Phosphorylation upon DNA damage induces relocalization to the nuclear plasma.

It is found in the nucleus. The protein localises to the nucleolus. It localises to the nucleoplasm. The protein resides in the mitochondrion. In terms of biological role, structure-specific nuclease with 5'-flap endonuclease and 5'-3' exonuclease activities involved in DNA replication and repair. During DNA replication, cleaves the 5'-overhanging flap structure that is generated by displacement synthesis when DNA polymerase encounters the 5'-end of a downstream Okazaki fragment. It enters the flap from the 5'-end and then tracks to cleave the flap base, leaving a nick for ligation. Also involved in the long patch base excision repair (LP-BER) pathway, by cleaving within the apurinic/apyrimidinic (AP) site-terminated flap. Acts as a genome stabilization factor that prevents flaps from equilibrating into structures that lead to duplications and deletions. Also possesses 5'-3' exonuclease activity on nicked or gapped double-stranded DNA, and exhibits RNase H activity. Also involved in replication and repair of rDNA and in repairing mitochondrial DNA. The protein is Flap endonuclease 1 of Schizosaccharomyces japonicus (strain yFS275 / FY16936) (Fission yeast).